Here is a 600-residue protein sequence, read N- to C-terminus: Aspartate--tRNA(Asp/Asn) ligase (600 aa).

Glu-175 lines the L-aspartate pocket. Positions 199 to 202 are aspartate; that stretch reads QLFK. Arg-221 is a binding site for L-aspartate. ATP is bound by residues 221-223 and Gln-230; that span reads RDE. His-453 is a binding site for L-aspartate. Glu-487 serves as a coordination point for ATP. Position 494 (Arg-494) interacts with L-aspartate. 539 to 542 contacts ATP; the sequence is GWDR. The disordered stretch occupies residues 578 to 600; that stretch reads AAQRKESGIDFKPKKGPQGQKEK. Residues 580–590 are compositionally biased toward basic and acidic residues; that stretch reads QRKESGIDFKP.

It belongs to the class-II aminoacyl-tRNA synthetase family. Type 1 subfamily. As to quaternary structure, homodimer.

It is found in the cytoplasm. It catalyses the reaction tRNA(Asx) + L-aspartate + ATP = L-aspartyl-tRNA(Asx) + AMP + diphosphate. Aspartyl-tRNA synthetase with relaxed tRNA specificity since it is able to aspartylate not only its cognate tRNA(Asp) but also tRNA(Asn). Reaction proceeds in two steps: L-aspartate is first activated by ATP to form Asp-AMP and then transferred to the acceptor end of tRNA(Asp/Asn). This is Aspartate--tRNA(Asp/Asn) ligase from Corynebacterium jeikeium (strain K411).